We begin with the raw amino-acid sequence, 135 residues long: Holo-[acyl-carrier-protein] synthase (135 aa).

D8 and E57 together coordinate Mg(2+).

This sequence belongs to the P-Pant transferase superfamily. AcpS family. It depends on Mg(2+) as a cofactor.

It localises to the cytoplasm. The enzyme catalyses apo-[ACP] + CoA = holo-[ACP] + adenosine 3',5'-bisphosphate + H(+). In terms of biological role, transfers the 4'-phosphopantetheine moiety from coenzyme A to a Ser of acyl-carrier-protein. The chain is Holo-[acyl-carrier-protein] synthase from Methylobacterium sp. (strain 4-46).